A 325-amino-acid polypeptide reads, in one-letter code: GMP reductase (325 aa).

The active-site Thioimidate intermediate is C174. 203-226 (IIADGGIRTHGDIAKSIRFGATMV) lines the NADP(+) pocket.

It belongs to the IMPDH/GMPR family. GuaC type 2 subfamily.

The enzyme catalyses IMP + NH4(+) + NADP(+) = GMP + NADPH + 2 H(+). Functionally, catalyzes the irreversible NADPH-dependent deamination of GMP to IMP. It functions in the conversion of nucleobase, nucleoside and nucleotide derivatives of G to A nucleotides, and in maintaining the intracellular balance of A and G nucleotides. In Helicobacter pylori (strain G27), this protein is GMP reductase.